Here is a 263-residue protein sequence, read N- to C-terminus: Complement control protein C3 (263 aa).

The N-terminal stretch at 1–19 (MKVESVTFLTLLGIGCVLS) is a signal peptide. Sushi domains are found at residues 20-83 (CCTI…QCIK), 84-145 (RRCP…ICES), 146-203 (VKCQ…TCQI), and 204-263 (VKCP…KCVR). 8 disulfides stabilise this stretch: Cys21-Cys70, Cys54-Cys81, Cys86-Cys126, Cys112-Cys143, Cys148-Cys190, Cys176-Cys201, Cys206-Cys248, and Cys234-Cys261.

The protein belongs to the receptors of complement activation (RCA) family. As to quaternary structure, heterodimer with A56 protein; disulfide-linked.

It is found in the virion membrane. The protein resides in the host cell membrane. Its subcellular location is the secreted. Functionally, serves to protect the virus against complement attack by inhibiting both classical and alternative pathways of complement activation. Binds C3b and C4b. The polypeptide is Complement control protein C3 (Vaccinia virus (strain Copenhagen) (VACV)).